Consider the following 1050-residue polypeptide: Self-sufficient cytochrome P450 monooxygenase CYP505E5 (1050 aa).

Residue C405 coordinates heme. The segment at 461 to 495 is disordered; that stretch reads TATGLSRRSMLVARDGSSEESSNHPAEARGDHAPA. In terms of domain architecture, Flavodoxin-like spans 500 to 641; it reads VSFFYGSNSG…DLEAWEETSL (142 aa). Residues 506–510 and 585–617 contribute to the FMN site; these read SNSGT and VFGC…TRLA. Positions 679–907 constitute an FAD-binding FR-type domain; the sequence is KGLIEAKVTA…RPAKETFHLP (229 aa).

It in the N-terminal section; belongs to the cytochrome P450 family. FAD is required as a cofactor. The cofactor is FMN. Heme serves as cofactor.

It carries out the reaction 2 oxidized [cytochrome P450] + NADPH = 2 reduced [cytochrome P450] + NADP(+) + H(+). It catalyses the reaction an organic molecule + reduced [NADPH--hemoprotein reductase] + O2 = an alcohol + oxidized [NADPH--hemoprotein reductase] + H2O + H(+). The catalysed reaction is dodecanoate + reduced [NADPH--hemoprotein reductase] + O2 = 5-hydroxydodecanoate + oxidized [NADPH--hemoprotein reductase] + H2O + H(+). The enzyme catalyses tetradecanoate + reduced [NADPH--hemoprotein reductase] + O2 = 7-hydroxytetradecanoate + oxidized [NADPH--hemoprotein reductase] + H2O + H(+). It carries out the reaction dodecan-1-ol + reduced [NADPH--hemoprotein reductase] + O2 = 1,5-dodecanediol + oxidized [NADPH--hemoprotein reductase] + H2O + H(+). It catalyses the reaction dodecan-1-ol + reduced [NADPH--hemoprotein reductase] + O2 = 1,4-dodecanediol + oxidized [NADPH--hemoprotein reductase] + H2O + H(+). The catalysed reaction is dodecan-1-ol + reduced [NADPH--hemoprotein reductase] + O2 = 1,6-dodecanediol + oxidized [NADPH--hemoprotein reductase] + H2O + H(+). Self-sufficient cytochrome P450 monooxygenase that catalyzes the regioselective in-chain hydroxylation of alkanes, fatty alcohols, and fatty acids at the omega-7 position. Performs hydroxylation of C10-C16 n-alkanes and C12 and C14 fatty alcohols; and thereby enables the one step biocatalytic synthesis of rare alcohols such as 5-dodecanol and 7-tetradecanol. Converts 1-dodecanol into 1,5-dodecanediol as major product with very little sub-terminally hydroxylated products with the 1,4-dodecanediol and 1,6-dodecanediol more abundant. Converts dodecanoic acid to 5-hydroxydodecanoic acid which can be further converted into delta-dodecalactone by lactonization of the 5-hydroxy acid at low pH. Also gives sub-terminal hydroxylation of dodecanoic acid with 9-hydroxydodecanoic acid being the second most abundant product. In Aspergillus kawachii (strain NBRC 4308) (White koji mold), this protein is Self-sufficient cytochrome P450 monooxygenase CYP505E5.